A 121-amino-acid polypeptide reads, in one-letter code: Ribonuclease P protein component 4 (121 aa).

Residues cysteine 63, cysteine 66, cysteine 89, and cysteine 92 each contribute to the Zn(2+) site.

The protein belongs to the eukaryotic/archaeal RNase P protein component 4 family. Consists of a catalytic RNA component and at least 4-5 protein subunits. It depends on Zn(2+) as a cofactor.

Its subcellular location is the cytoplasm. It catalyses the reaction Endonucleolytic cleavage of RNA, removing 5'-extranucleotides from tRNA precursor.. Functionally, part of ribonuclease P, a protein complex that generates mature tRNA molecules by cleaving their 5'-ends. This is Ribonuclease P protein component 4 from Methanobrevibacter smithii (strain ATCC 35061 / DSM 861 / OCM 144 / PS).